The chain runs to 379 residues: Protein RecA (379 aa).

ATP is bound at residue 79–86 (GPESSGKT).

Belongs to the RecA family.

The protein localises to the cytoplasm. In terms of biological role, can catalyze the hydrolysis of ATP in the presence of single-stranded DNA, the ATP-dependent uptake of single-stranded DNA by duplex DNA, and the ATP-dependent hybridization of homologous single-stranded DNAs. It interacts with LexA causing its activation and leading to its autocatalytic cleavage. This is Protein RecA from Streptococcus thermophilus.